A 104-amino-acid chain; its full sequence is Small ribosomal subunit protein bS18c (104 aa).

This sequence belongs to the bacterial ribosomal protein bS18 family. Part of the 30S ribosomal subunit.

Its subcellular location is the plastid. It localises to the chloroplast. The sequence is that of Small ribosomal subunit protein bS18c from Lotus japonicus (Lotus corniculatus var. japonicus).